A 414-amino-acid chain; its full sequence is Mini-circle putative transposase for IS117 (414 aa).

The polypeptide is Mini-circle putative transposase for IS117 (Streptomyces coelicolor (strain ATCC BAA-471 / A3(2) / M145)).